A 616-amino-acid polypeptide reads, in one-letter code: Glycoprotein Q1 (616 aa).

Residues Met-1–Ala-24 form the signal peptide. N-linked (GlcNAc...) asparagine; by host glycans are attached at residues Asn-23, Asn-44, Asn-282, Asn-330, and Asn-351.

In terms of assembly, interacts with isoform gQ2. The heterodimer gQ1-gQ2 associates with the glycoprotein complex gH-gL to form a tetrameric complex. The gH/gL/gQ1/gQ2 complex binds to host TNFRSF4. Post-translationally, glycosylated by host.

It localises to the virion. Its subcellular location is the host endoplasmic reticulum lumen. In terms of biological role, plays a role in virus entry by participating in host receptor binding at the cell surface. This chain is Glycoprotein Q1, found in Homo sapiens (Human).